The chain runs to 484 residues: tRNA-2-methylthio-N(6)-dimethylallyladenosine synthase (484 aa).

The region spanning 29 to 149 (GVFHIHTLGC…LPKLLDQNRA (121 aa)) is the MTTase N-terminal domain. Residues Cys38, Cys78, Cys112, Cys186, Cys190, and Cys193 each contribute to the [4Fe-4S] cluster site. One can recognise a Radical SAM core domain in the interval 172 to 401 (RASRISSWVA…VALQEQITEE (230 aa)). One can recognise a TRAM domain in the interval 404–474 (ATFEGRDVEV…RHNLLADPDV (71 aa)).

This sequence belongs to the methylthiotransferase family. MiaB subfamily. In terms of assembly, monomer. [4Fe-4S] cluster is required as a cofactor.

It localises to the cytoplasm. It carries out the reaction N(6)-dimethylallyladenosine(37) in tRNA + (sulfur carrier)-SH + AH2 + 2 S-adenosyl-L-methionine = 2-methylsulfanyl-N(6)-dimethylallyladenosine(37) in tRNA + (sulfur carrier)-H + 5'-deoxyadenosine + L-methionine + A + S-adenosyl-L-homocysteine + 2 H(+). Its function is as follows. Catalyzes the methylthiolation of N6-(dimethylallyl)adenosine (i(6)A), leading to the formation of 2-methylthio-N6-(dimethylallyl)adenosine (ms(2)i(6)A) at position 37 in tRNAs that read codons beginning with uridine. The sequence is that of tRNA-2-methylthio-N(6)-dimethylallyladenosine synthase from Bifidobacterium longum subsp. infantis (strain ATCC 15697 / DSM 20088 / JCM 1222 / NCTC 11817 / S12).